A 388-amino-acid polypeptide reads, in one-letter code: Flavin-dependent monooxygenase (388 aa).

FAD contacts are provided by residues 12 to 15, 34 to 36, 44 to 47, Arg-105, Tyr-267, Asp-289, and 296 to 302; these read VGVA, EKS, QALD, and PLSGQGN.

The protein belongs to the aromatic-ring hydroxylase family. It depends on FAD as a cofactor.

The enzyme catalyses a tetracycline + NADPH + O2 + H(+) = a (1S,10aS)-3-(CONH2)-1-(Me2N)-3,3a,4,6-(HO)4-2,5-dioxo-1H,10aH,11H,11aH-cyclopenta[b]anthracene + CO + NADP(+) + H2O. It carries out the reaction 7-chlorotetracycline + NADPH + O2 + H(+) = (1S,10S,10aS)-3-(CONH2)-9-Cl-1-(Me2N)-3,3a,4,10-(HO)4-10-Me-2,5-dioxo-1H,10aH,11H,11aH-cyclopenta[b]anthracen-6-olate + CO + NADP(+) + H2O. With respect to regulation, inhibited by anhydrotetracycline. Its function is as follows. An FAD-requiring monooxygenase active on tetracycline antibiotic and some of its derivatives, which leads to their inactivation. Expression in E.coli confers high resistance to tetracycline and oxytetracycline, does not confer resistance to minocycline or tigecycline. Degrades tetracycline and oxytetracycline; the reaction requires NADPH. Degrades and confers resistance to chlortetracycline. The polypeptide is Flavin-dependent monooxygenase (tet(50)) (Unknown prokaryotic organism).